We begin with the raw amino-acid sequence, 457 residues long: Acetylcholine receptor subunit alpha (457 aa).

A signal peptide spans 1–20; it reads MELSTVLLLLGLCSAGLVLG. At 21–230 the chain is on the extracellular side; that stretch reads SEHETRLVAK…ITYHFVMQRL (210 aa). 2 disulfides stabilise this stretch: cysteine 148-cysteine 162 and cysteine 212-cysteine 213. The N-linked (GlcNAc...) asparagine glycan is linked to asparagine 161. 3 consecutive transmembrane segments (helical) span residues 231–255, 263–281, and 297–316; these read PLYF…VFYL, MTLS…LVIV, and YMLF…VIVI. Topologically, residues 317-428 are cytoplasmic; sequence NTHHRSPSTH…WKYVAMVMDH (112 aa). A helical membrane pass occupies residues 429-447; it reads ILLGVFMLVCLIGTLAVFA.

It belongs to the ligand-gated ion channel (TC 1.A.9) family. Acetylcholine receptor (TC 1.A.9.1) subfamily. Alpha-1/CHRNA1 sub-subfamily. In terms of assembly, one of the alpha chains that assemble within the acetylcholine receptor, a pentamer of two alpha chains, a beta, a delta, and a gamma (in immature muscle) or epsilon (in mature muscle) chains. The muscle heteropentamer composed of alpha-1, beta-1, delta, epsilon subunits interacts with the alpha-conotoxin ImII.

The protein localises to the postsynaptic cell membrane. Its subcellular location is the cell membrane. It catalyses the reaction K(+)(in) = K(+)(out). It carries out the reaction Na(+)(in) = Na(+)(out). Upon acetylcholine binding, the AChR responds by an extensive change in conformation that affects all subunits and leads to opening of an ion-conducting channel across the plasma membrane. This chain is Acetylcholine receptor subunit alpha (Chrna1), found in Mus musculus (Mouse).